The chain runs to 530 residues: Autoinducer-2 kinase (530 aa).

It belongs to the FGGY kinase family.

The protein resides in the cytoplasm. The catalysed reaction is (S)-4,5-dihydroxypentane-2,3-dione + ATP = (2S)-2-hydroxy-3,4-dioxopentyl phosphate + ADP + H(+). In terms of biological role, catalyzes the phosphorylation of autoinducer-2 (AI-2) to phospho-AI-2, which subsequently inactivates the transcriptional regulator LsrR and leads to the transcription of the lsr operon. Phosphorylates the ring-open form of (S)-4,5-dihydroxypentane-2,3-dione (DPD), which is the precursor to all AI-2 signaling molecules, at the C5 position. In Salmonella paratyphi B (strain ATCC BAA-1250 / SPB7), this protein is Autoinducer-2 kinase.